The sequence spans 400 residues: Large envelope protein (400 aa).

N-acetylmethionine is present on methionine 1. Disordered stretches follow at residues 1–42 and 84–118; these read MGGY…NNPD and ILTT…SHPQ. A lipid anchor (N-myristoyl glycine; by host) is attached at glycine 2. A pre-S1 region spans residues 2–119; sequence GGYSSKPRKG…PPLRDSHPQA (118 aa). The interval 2–174 is pre-S; that stretch reads GGYSSKPRKG…FSRTGDPVPK (173 aa). Topologically, residues 2–181 are virion surface; in external conformation; sequence GGYSSKPRKG…VPKMENTTSG (180 aa). The Intravirion; in internal conformation segment spans residues 2–253; sequence GGYSSKPRKG…PGYRWMCLRR (252 aa). The N-linked (GlcNAc...) asparagine glycan is linked to tyrosine 4. The pre-S2 stretch occupies residues 120 to 174; sequence MQWNSTTFHQALLDPRVRGLYFPAGGSSSGTANPVPTTASPISSIFSRTGDPVPK. Residues 182 to 202 form a helical membrane-spanning segment; sequence FLGPLLVLQAGFFLLTRILTI. The Intravirion; in external conformation segment spans residues 203-253; sequence PQSLDSWWTSLNFLGGAPACPGQNSQSPTSNHSPTSCPPICPGYRWMCLRR. A helical transmembrane segment spans residues 254–274; the sequence is FIIFLFILLLCLIFLLVLLDY. Topologically, residues 275–348 are virion surface; sequence QGMLPVCPLI…WASVRFSWLS (74 aa). N-linked (GlcNAc...) asparagine; by host glycosylation occurs at asparagine 320. The chain crosses the membrane as a helical span at residues 349–369; the sequence is LLAPFVQWFVGLSPTVWLSVI. Topologically, residues 370–375 are intravirion; the sequence is WMMWYW. A helical transmembrane segment spans residues 376–398; it reads GPSLYNILSPFLPLLPIFFCLWV. Residues 399–400 lie on the Virion surface side of the membrane; the sequence is YI.

Belongs to the orthohepadnavirus major surface antigen family. In its internal form (Li-HBsAg), interacts with the capsid protein and with the isoform S. Interacts with host chaperone CANX. In terms of assembly, associates with host chaperone CANX through its pre-S2 N glycan; this association may be essential for isoform M proper secretion. As to quaternary structure, interacts with isoform L. Interacts with the antigens of satellite virus HDV (HDVAgs); this interaction is required for encapsidation of HDV genomic RNA. In terms of processing, isoform M is N-terminally acetylated by host at a ratio of 90%, and N-glycosylated by host at the pre-S2 region. Post-translationally, myristoylated.

The protein resides in the virion membrane. Its function is as follows. The large envelope protein exists in two topological conformations, one which is termed 'external' or Le-HBsAg and the other 'internal' or Li-HBsAg. In its external conformation the protein attaches the virus to cell receptors and thereby initiating infection. This interaction determines the species specificity and liver tropism. This attachment induces virion internalization predominantly through caveolin-mediated endocytosis. The large envelope protein also assures fusion between virion membrane and endosomal membrane. In its internal conformation the protein plays a role in virion morphogenesis and mediates the contact with the nucleocapsid like a matrix protein. Functionally, the middle envelope protein plays an important role in the budding of the virion. It is involved in the induction of budding in a nucleocapsid independent way. In this process the majority of envelope proteins bud to form subviral lipoprotein particles of 22 nm of diameter that do not contain a nucleocapsid. The polypeptide is Large envelope protein (Homo sapiens (Human)).